Here is a 65-residue protein sequence, read N- to C-terminus: Large ribosomal subunit protein bL35 (65 aa).

The tract at residues 1–22 (MPKIKTVRGAAKRFKKTGKGGF) is disordered. Residues 10–22 (AAKRFKKTGKGGF) show a composition bias toward basic residues.

The protein belongs to the bacterial ribosomal protein bL35 family.

This chain is Large ribosomal subunit protein bL35, found in Escherichia coli O127:H6 (strain E2348/69 / EPEC).